Reading from the N-terminus, the 164-residue chain is Ecotin (164 aa).

The N-terminal stretch at 1–20 is a signal peptide; the sequence is MKMFVPAVVFAALASASAWA. A disulfide bridge links C72 with C109.

This sequence belongs to the protease inhibitor I11 (ecotin) family. In terms of assembly, homodimer.

It localises to the periplasm. General inhibitor of pancreatic serine proteases: inhibits chymotrypsin, trypsin, elastases, factor X, kallikrein as well as a variety of other proteases. This is Ecotin from Salmonella enteritidis PT4 (strain P125109).